The following is a 1171-amino-acid chain: DNA-directed RNA polymerase subunit beta (1171 aa).

This sequence belongs to the RNA polymerase beta chain family. As to quaternary structure, the RNAP catalytic core consists of 2 alpha, 1 beta, 1 beta' and 1 omega subunit. When a sigma factor is associated with the core the holoenzyme is formed, which can initiate transcription.

The catalysed reaction is RNA(n) + a ribonucleoside 5'-triphosphate = RNA(n+1) + diphosphate. In terms of biological role, DNA-dependent RNA polymerase catalyzes the transcription of DNA into RNA using the four ribonucleoside triphosphates as substrates. The chain is DNA-directed RNA polymerase subunit beta from Kineococcus radiotolerans (strain ATCC BAA-149 / DSM 14245 / SRS30216).